A 116-amino-acid polypeptide reads, in one-letter code: MWDPLLNEFPESVHGFRCMLAIKYLQSVEETYEPNTLGHDLIRDLISVVRARDYVEATRRYNHFHARLEGSPKAELRQPIQQPCCCPHCPRHKQATIMDVQAHVPKAQNIQNVSKP.

The protein belongs to the geminiviridae protein AV2/V2 family. In terms of assembly, interacts with host SGS3.

Its subcellular location is the host cytoplasm. The protein localises to the host perinuclear region. Its function is as follows. Through its interaction with host SGS3, acts as a suppressor of RNA-mediated gene silencing, also known as post-transcriptional gene silencing (PTGS), a mechanism of plant viral defense that limits the accumulation of viral RNAs. The sequence is that of Protein V2 from Tomato yellow leaf curl virus (strain Israel) (TYLCV).